Here is a 183-residue protein sequence, read N- to C-terminus: Oligoribonuclease (183 aa).

The Exonuclease domain occupies 8–171; sequence LIWLDMEMTG…ADIRESIAEL (164 aa). Tyrosine 129 is a catalytic residue.

The protein belongs to the oligoribonuclease family.

It localises to the cytoplasm. In terms of biological role, 3'-to-5' exoribonuclease specific for small oligoribonucleotides. The chain is Oligoribonuclease from Aromatoleum aromaticum (strain DSM 19018 / LMG 30748 / EbN1) (Azoarcus sp. (strain EbN1)).